We begin with the raw amino-acid sequence, 243 residues long: Transcription factor TCP6 (243 aa).

Positions 1–55 are disordered; that stretch reads MVMEPKKNQNLPSFLNPSRQNQDNDKKRKQTEVKGFDIVVGEKRKKKENEEEDQE. Over residues 8–21 the composition is skewed to polar residues; sequence NQNLPSFLNPSRQN. Over residues 22–35 the composition is skewed to basic and acidic residues; the sequence is QDNDKKRKQTEVKG. A coiled-coil region spans residues 42–66; that stretch reads EKRKKKENEEEDQEIQILYEKEKKK. The TCP domain occupies 68–122; the sequence is NKDRHLKVEGRGRRVRLPPLCAARIYQLTKELGHKSDGETLEWLLQHAEPSILSA.

In terms of assembly, interacts with SPL.

The protein resides in the nucleus. In Arabidopsis thaliana (Mouse-ear cress), this protein is Transcription factor TCP6 (TCP6).